Here is a 628-residue protein sequence, read N- to C-terminus: (+)-alpha-pinene synthase, chloroplastic (628 aa).

The transit peptide at 1 to 48 (MALVSAVPLNSKLCLRRTLFGFSHELKAIHSTVPNLGMCRGGKSIAPS) directs the protein to the chloroplast. Residues Asp379, Asp383, and Asp531 each contribute to the Mg(2+) site. The DDXXD motif motif lies at 379-383 (DDIYD). Ser539 contributes to the K(+) binding site.

It belongs to the terpene synthase family. Tpsd subfamily. Mg(2+) is required as a cofactor. The cofactor is Mn(2+). Requires K(+) as cofactor.

Its subcellular location is the plastid. It is found in the chloroplast. It carries out the reaction (2E)-geranyl diphosphate = (1R,5R)-alpha-pinene + diphosphate. Its pathway is terpene metabolism; oleoresin biosynthesis. Its function is as follows. Involved in defensive oleoresin formation in conifers in response to insect attack or other injury. Involved in monoterpene (C10) olefins biosynthesis. Produces mainly (+)-alpha-pinene (97%) with a small amount of (-)-alpha-pinene (3%). This Pinus taeda (Loblolly pine) protein is (+)-alpha-pinene synthase, chloroplastic (PT30).